The following is a 46-amino-acid chain: Spectrin alpha chain, non-erythrocytic 1 (46 aa).

Spectrin repeat units lie at residues 1 to 5 (AQLAD), 7 to 14 (FHLQQFFR), 15 to 20 (SQLLGS), 21 to 26 (AHEVQR), 27 to 35 (LAQFVEHWK), and 39 to 46 (DLFLTFAK).

It belongs to the spectrin family. Associates with the gamma-tubulin complex in brain, but not in kidney, liver, sperm, or uterus. Like erythrocyte spectrin, the spectrin-like proteins are capable of forming dimers which can further associate to tetramers. Interacts with isoform 1 of ACP1. Interacts with CALM and EMD. Interacts (via C-terminal spectrin repeats) with TRPC4. Identified in a complex with ACTN4, CASK, IQGAP1, MAGI2, NPHS1 and SPTBN1. Interacts with CLN3; this interaction regulates the fodrin localization at the plasma membrane.

Its subcellular location is the cytoplasm. It is found in the cytoskeleton. The protein localises to the cell cortex. In terms of biological role, fodrin, which seems to be involved in secretion, interacts with calmodulin in a calcium-dependent manner and is thus candidate for the calcium-dependent movement of the cytoskeleton at the membrane. In Capra hircus (Goat), this protein is Spectrin alpha chain, non-erythrocytic 1 (SPTAN1).